The primary structure comprises 164 residues: HTH-type transcriptional regulator IscR (164 aa).

Positions Arg-2–Lys-131 constitute an HTH rrf2-type domain. A DNA-binding region (H-T-H motif) is located at residues Leu-28–Lys-51. The [2Fe-2S] cluster site is built by Cys-92, Cys-98, and Cys-104. The interval Asp-140–Ala-164 is disordered. Positions Gly-152 to Ala-164 are enriched in polar residues.

[2Fe-2S] cluster serves as cofactor.

Functionally, regulates the transcription of several operons and genes involved in the biogenesis of Fe-S clusters and Fe-S-containing proteins. The chain is HTH-type transcriptional regulator IscR from Xenorhabdus nematophila (strain ATCC 19061 / DSM 3370 / CCUG 14189 / LMG 1036 / NCIMB 9965 / AN6).